The primary structure comprises 110 residues: uncharacterized protein (110 aa).

Residues 29–49 traverse the membrane as a helical segment; sequence GLAFIFFFLVAFYFFPAFWDL.

It is found in the membrane. This is an uncharacterized protein from Saccharomyces cerevisiae (strain ATCC 204508 / S288c) (Baker's yeast).